The sequence spans 830 residues: Venom phosphodiesterase (830 aa).

SMB domains follow at residues 7 to 50 and 51 to 95; these read PLES…VLPT and QSWS…RETS. 16 cysteine pairs are disulfide-bonded: C11-C15, C11-C28, C15-C46, C26-C28, C26-C39, C32-C38, C39-C46, C55-C60, C55-C72, C60-C90, C70-C72, C70-C83, C76-C82, C83-C90, C101-C147, and C109-C321. The N-linked (GlcNAc...) asparagine glycan is linked to N16. The short motif at 35-37 is the Cell attachment site element; the sequence is RKA. Residues D124 and T162 each coordinate a divalent metal cation. T162 serves as the catalytic AMP-threonine intermediate. Residues N193, N236, and N247 are each glycosylated (N-linked (GlcNAc...) asparagine). K248 is a binding site for AMP. A divalent metal cation contacts are provided by D282, H286, D329, and H330. Position 286 (H286) interacts with AMP. Intrachain disulfides connect C337-C434, C385-C772, C518-C575, C531-C632, C533-C617, and C740-C750. Residue H439 participates in a divalent metal cation binding. N489 carries an N-linked (GlcNAc...) asparagine glycan. Residues N723 and N742 are each glycosylated (N-linked (GlcNAc...) asparagine).

Belongs to the nucleotide pyrophosphatase/phosphodiesterase family. In terms of assembly, monomer cleaved in two subunits; disulfide-linked. Is synthesized as a single-chain protein and is subsequently cleaved to form a two-subunit protein held together with disulfide bonds. Requires a divalent metal cation as cofactor. As to expression, expressed by venom gland.

Its subcellular location is the secreted. The catalysed reaction is ADP + H2O = AMP + phosphate + H(+). In terms of biological role, hydrolyzes ADP with high activity. Shows weak or no activity on 5'-AMP, 5'-GMP, 3'-AMP, ATP, cAMP, and cGMP. Is devoid of monophosphatase and proteinase activities. Dose-dependently inhibits platelet aggregation induced by ADP and collagen. This is Venom phosphodiesterase from Naja atra (Chinese cobra).